Consider the following 211-residue polypeptide: Thymidylate kinase (211 aa).

11–18 (GPDGAGKT) is a binding site for ATP.

Belongs to the thymidylate kinase family.

The enzyme catalyses dTMP + ATP = dTDP + ADP. Phosphorylation of dTMP to form dTDP in both de novo and salvage pathways of dTTP synthesis. The chain is Thymidylate kinase from Streptococcus uberis (strain ATCC BAA-854 / 0140J).